We begin with the raw amino-acid sequence, 180 residues long: UPF0134 protein MPN_368 (180 aa).

It belongs to the UPF0134 family.

This chain is UPF0134 protein MPN_368, found in Mycoplasma pneumoniae (strain ATCC 29342 / M129 / Subtype 1) (Mycoplasmoides pneumoniae).